Reading from the N-terminus, the 792-residue chain is Ubiquitin carboxyl-terminal hydrolase 10 (792 aa).

The DHR2-binding module stretch occupies residues 2–27 (TTQESIKPLVDRILSNPLQFNAAMIS). Disordered stretches follow at residues 64 to 87 (AESK…NTVP) and 103 to 320 (KDAA…SITP). A compositionally biased stretch (low complexity) spans 107-129 (DATGAKKSAELSTELSTEPPSSS). Residues 109-145 (TGAKKSAELSTELSTEPPSSSSEDDKVGKEEEEEGEI) form an SIR4-binding module region. Over residues 144 to 171 (EIFHEARDYVEPRKASLKERDNADKGDG) the composition is skewed to basic and acidic residues. Residues 167 to 208 (DKGDGEDIGEDIGEDIGEDIGEDIGEDIGENLGSPLATIDDS) form a UTP22-binding module region. Positions 172–195 (EDIGEDIGEDIGEDIGEDIGEDIG) are enriched in acidic residues. The span at 211-220 (ENEKEKRKEL) shows a compositional bias: basic and acidic residues. Residues 226-241 (SDDEIEDDEDEDDMDY) are compositionally biased toward acidic residues. Over residues 288 to 297 (VNNTKENGNR) the composition is skewed to polar residues. The USP domain maps to 362–733 (RGLLNHGVTC…NAYYLLYTRL (372 aa)). The active-site Nucleophile is C371. The segment at 526-563 (LDPNSDLSSDSINGTSATTSTTTSNAATKPSLSSSSSV) is disordered. The segment covering 530–539 (SDLSSDSING) has biased composition (polar residues). Residues 540–563 (TSATTSTTTSNAATKPSLSSSSSV) show a composition bias toward low complexity. The Proton acceptor role is filled by H691. Positions 749–766 (TGNVTSKSKQEQAVNEPN) are enriched in polar residues. The interval 749 to 792 (TGNVTSKSKQEQAVNEPNNRPLKINSKKNNRKKWKKNKKRKFTK) is disordered. Residues 773-792 (NSKKNNRKKWKKNKKRKFTK) show a composition bias toward basic residues.

This sequence belongs to the peptidase C19 family. As to quaternary structure, interacts with SIR4. Interacts with the proliferating-cell nuclear antigen PCNA/POL30. Interacts with DHR2 and UTP22.

Its subcellular location is the nucleus. The protein resides in the chromosome. The protein localises to the telomere. It is found in the nucleolus. It carries out the reaction Thiol-dependent hydrolysis of ester, thioester, amide, peptide and isopeptide bonds formed by the C-terminal Gly of ubiquitin (a 76-residue protein attached to proteins as an intracellular targeting signal).. Its function is as follows. Deubiquitinating enzyme involved in telomere and HM loci silencing, which is the repression of chromatin structure which leads to a stop in the transcription of nearby genes. Targets histone H2B for deubiquitination, thus helping to localize SIR2 to the telomere. At silent chromatin, including telomeres and the rDNA locus, not only maintains low H2B 'Lys-123' ubiquitination (H2BK123Ub), but also low H3 'Lys-4' and 'Lys-79' methylation (H3K4me and H3K79me, respectively). Controls the proliferating-cell nuclear antigen PCNA/POL30 deubiquitination which is crucial for keeping TLS polymerases in check as well as for down-regulating the error-free bypass. Deubiquitinates and stabilizes RPA190, the largest subunit of RNA polymerase I, to achieve optimal levels of ribosomes and cell growth. Also protects nutrient transporters such as GAP1 from ubiquitin-dependent endocytosis. The protein is Ubiquitin carboxyl-terminal hydrolase 10 (UBP10) of Saccharomyces cerevisiae (strain ATCC 204508 / S288c) (Baker's yeast).